Reading from the N-terminus, the 402-residue chain is p-cumate 2,3-dioxygenase system, ferredoxin--NAD(+) reductase component (402 aa).

FAD contacts are provided by Ala-16, Lys-51, Val-83, Arg-131, and Asp-275.

Belongs to the FAD-dependent oxidoreductase family. In terms of assembly, the p-cumate 2,3-dioxygenase multicomponent enzyme system is composed of an electron transfer component and a dioxygenase component (iron sulfur protein (ISP)). The electron transfer component is composed of a ferredoxin reductase (CmtAa) and a ferredoxin (CmtAd), and the dioxygenase component is formed of a large alpha subunit (CmtAb) and a small beta subunit (CmtAc). FAD is required as a cofactor.

It catalyses the reaction 2 reduced [2Fe-2S]-[ferredoxin] + NAD(+) + H(+) = 2 oxidized [2Fe-2S]-[ferredoxin] + NADH. The protein operates within aromatic compound metabolism; p-cumate degradation; acetaldehyde and pyruvate from p-cumate. Component of the p-cumate 2,3-dioxygenase multicomponent enzyme system which catalyzes the incorporation of both atoms of molecular oxygen into p-cumate to form cis-2,3-dihydroxy-2,3-dihydro-p-cumate. Ferredoxin reductase catalyzes the transfer of electrons from NADH to ferredoxin (CmtAd). This is p-cumate 2,3-dioxygenase system, ferredoxin--NAD(+) reductase component from Pseudomonas putida (Arthrobacter siderocapsulatus).